The sequence spans 160 residues: Oocyte-secreted protein 4B (160 aa).

The N-terminal stretch at 1-13 is a signal peptide; it reads MKTSVLLAITAMC.

The protein belongs to the PLAC1 family.

It localises to the secreted. This is Oocyte-secreted protein 4B from Homo sapiens (Human).